Here is a 139-residue protein sequence, read N- to C-terminus: HTH-type transcriptional regulator MntR (139 aa).

The HTH dtxR-type domain maps to 1-63; sequence MPTPSMEDHI…YEKYRGLTLT (63 aa). 6 residues coordinate Mn(2+): D8, E11, H77, E99, E102, and H103.

Belongs to the DtxR/MntR family. Homodimer.

Its subcellular location is the cytoplasm. Its activity is regulated as follows. DNA binding is strongly activated by Mn(2+). Functionally, central regulator of manganese homeostasis. The chain is HTH-type transcriptional regulator MntR from Lysinibacillus sphaericus (strain C3-41).